The primary structure comprises 484 residues: FAD-dependent monooxygenase aurC (484 aa).

The signal sequence occupies residues 1–21 (MGAYSFRVIIVGGSITGMTLA). Positions 35, 49, and 108 each coordinate FAD. The active site involves tyrosine 216. FAD is bound by residues aspartate 308 and glycine 321. The chain crosses the membrane as a helical span at residues 451-471 (FAVASLIVLIVVLARALDSPA).

This sequence belongs to the paxM FAD-dependent monooxygenase family. FAD serves as cofactor.

Its subcellular location is the membrane. It participates in polyketide biosynthesis. In terms of biological role, FAD-dependent monooxygenase; part of the gene cluster that mediates the biosynthesis of aurovertins, fungal polyketides that exhibit potent inhibition of adenosine triphosphate synthase. Tha biosynthesis starts with the HR-PKS aurA that selects propionate as the starter unit; synthesizes a hexa-ene chain through the repeated functions of the KR and DH domains in the first six iterations; selectively introduces three alpha-methyl substitutions at C4, C6, and C16 using the S-adensylmethionine-dependent cMET; and shuts off KR and DH in the last three iterations to afford a 1,3,5-triketo portion that can undergo intramolecular cyclization to yield the alpha-pyrone intermediate. AurE may act as a cyclase and enhances the rate of pyrone formation and product release of aurA. The methyltransferase aurB then methylates the C17 hydroxyl group. C17 methylation is required to initiate epoxidation by the downstream monooxygenase aurC. The monooxygenase aurC and the epoxide hydrolase aurD can iteratively transform the terminal triene portion of the methylated precursor into the dioxabicyclo[3.2.1]octane scaffold of aurovertin E. Epoxidation modifications of the precursor occur in two separate steps; bis-epoxidation of the two terminal olefins takes place first, followed by another epoxidation that occurs at C7-C8 after tetrahydrofuran formation. The O-acyltransferase aurG converts aurovertin E to aurovertin A. The sequence is that of FAD-dependent monooxygenase aurC from Calcarisporium arbuscula (Dendryphion arbuscula).